The chain runs to 56 residues: Photosystem II reaction center X protein (56 aa).

Residues 27-47 (IGSFLAAGALIVAPAAAALIW) traverse the membrane as a helical segment.

The protein belongs to the PsbX family. Type 2 subfamily. PSII consists of a core antenna complex that captures photons, and an electron transfer chain that converts photonic excitation into a charge separation. PSII forms dimeric complexes.

The protein resides in the cellular thylakoid membrane. Functionally, involved in the binding and/or turnover of quinones at the Q(B) site of Photosystem II. This chain is Photosystem II reaction center X protein, found in Prochlorococcus marinus (strain NATL2A).